The sequence spans 56 residues: MNSKIEEMRITLIETAQKYGMNSKETIQCSQELDILLNTRIKEEMIFGRYLENSRM.

Belongs to the spo0E family.

Aspartyl-phosphate phosphatase which specifically dephosphorylates the sporulation transcription factor Spo0A-P and negatively regulates the sporulation initiation pathway in order to control the proper timing of sporulation. This chain is Aspartyl-phosphate phosphatase YisI (yisI), found in Bacillus subtilis (strain 168).